Consider the following 94-residue polypeptide: NADH-ubiquinone oxidoreductase 10.5 kDa subunit (94 aa).

The protein belongs to the complex I NDUFA2 subunit family. Complex I is composed of about 40 different subunits.

The protein localises to the mitochondrion inner membrane. Its function is as follows. Accessory subunit of the mitochondrial membrane respiratory chain NADH dehydrogenase (Complex I), that is believed not to be involved in catalysis. Complex I functions in the transfer of electrons from NADH to the respiratory chain. The immediate electron acceptor for the enzyme is believed to be ubiquinone. The chain is NADH-ubiquinone oxidoreductase 10.5 kDa subunit (nuo-10.5) from Neurospora crassa (strain ATCC 24698 / 74-OR23-1A / CBS 708.71 / DSM 1257 / FGSC 987).